The chain runs to 405 residues: Saccharopepsin (405 aa).

An N-terminal signal peptide occupies residues 1 to 22; the sequence is MFSLKALLPLALLLVSANQVAA. Positions 23 to 76 are cleaved as a propeptide — activation peptide; sequence KVHKAKIYKHELSDEMKEVTFEQHLAHLGQKYLTQFEKANPEVVFSREHPFFTE. The region spanning 91–402 is the Peptidase A1 domain; sequence YYTDITLGTP…DLGNNAVGLA (312 aa). Residue Asp-109 is part of the active site. Residues Cys-122 and Cys-127 are joined by a disulfide bond. An N-linked (GlcNAc...) asparagine glycan is attached at Asn-144. Asp-294 is an active-site residue. Cys-328 and Cys-361 are oxidised to a cystine. Asn-345 carries an N-linked (GlcNAc...) asparagine glycan.

Belongs to the peptidase A1 family.

It localises to the vacuole. The catalysed reaction is Hydrolysis of proteins with broad specificity for peptide bonds. Cleaves -Leu-Leu-|-Val-Tyr- bond in a synthetic substrate. Does not act on esters of Tyr or Arg.. Functionally, aspartyl protease implicated in the post-translational regulation of S.cerevisiae vacuolar proteinases. Acts on YSCB, on YSCY and on itself. In Saccharomyces cerevisiae (strain ATCC 204508 / S288c) (Baker's yeast), this protein is Saccharopepsin (PEP4).